A 357-amino-acid polypeptide reads, in one-letter code: Glutamyl endopeptidase (357 aa).

Positions 1-29 (MKGKFLKVSSLFVATLTTATLVSSPAANA) are cleaved as a signal peptide. A propeptide spanning residues 30–68 (LSSKAMDNHPQQTQTDKQQTPKIQKGGNLKPLEQRERAN) is cleaved from the precursor. Residues 33 to 58 (KAMDNHPQQTQTDKQQTPKIQKGGNL) are disordered. Residues 40 to 54 (QQTQTDKQQTPKIQK) show a composition bias toward low complexity. Residues His-119, Asp-161, and Ser-237 each act as charge relay system in the active site. Residues 282-357 (NFANDDHPNN…NNNSDNPDAA (76 aa)) form a disordered region. 18 tandem repeats follow at residues 289–291 (PNN), 292–294 (PDN), 295–297 (PDN), 298–300 (PNN), 301–303 (PDN), 304–306 (PNN), 307–309 (PDN), 310–312 (PNN), 313–315 (PDN), 316–318 (PDN), 319–321 (PNN), 322–324 (PDN), 325–327 (PNN), 328–330 (PDN), 331–333 (PNN), 337–339 (PNN), 340–342 (PNN), and 343–345 (PDN). The interval 289–345 (PNNPDNPDNPNNPDNPNNPDNPNNPDNPDNPNNPDNPNNPDNPNNPDQPNNPNNPDN) is 18 X 3 AA repeats of P-[DN]-N. The segment covering 291–357 (NPDNPDNPNN…NNNSDNPDAA (67 aa)) has biased composition (low complexity).

Belongs to the peptidase S1B family. Post-translationally, proteolytically cleaved by aureolysin (aur). This cleavage leads to the activation of SspA.

It is found in the secreted. The enzyme catalyses Preferential cleavage: Glu-|-Xaa, Asp-|-Xaa.. Preferentially cleaves peptide bonds on the carboxyl-terminal side of aspartate and glutamate. Along with other extracellular proteases it is involved in colonization and infection of human tissues. Required for proteolytic maturation of thiol protease SspB and inactivation of SspC, an inhibitor of SspB. It is the most important protease for degradation of fibronectin-binding protein (FnBP) and surface protein A, which are involved in adherence to host cells. May also protect bacteria against host defense mechanism by cleaving the immunoglobulin classes IgG, IgA and IgM. May be involved in the stability of secreted lipases. This Staphylococcus aureus (strain MRSA252) protein is Glutamyl endopeptidase (sspA).